Reading from the N-terminus, the 91-residue chain is DNA-directed RNA polymerase subunit omega (91 aa).

This sequence belongs to the RNA polymerase subunit omega family. The RNAP catalytic core consists of 2 alpha, 1 beta, 1 beta' and 1 omega subunit. When a sigma factor is associated with the core the holoenzyme is formed, which can initiate transcription.

The catalysed reaction is RNA(n) + a ribonucleoside 5'-triphosphate = RNA(n+1) + diphosphate. Its function is as follows. Promotes RNA polymerase assembly. Latches the N- and C-terminal regions of the beta' subunit thereby facilitating its interaction with the beta and alpha subunits. This chain is DNA-directed RNA polymerase subunit omega, found in Photorhabdus laumondii subsp. laumondii (strain DSM 15139 / CIP 105565 / TT01) (Photorhabdus luminescens subsp. laumondii).